The chain runs to 105 residues: Putative pterin-4-alpha-carbinolamine dehydratase (105 aa).

Belongs to the pterin-4-alpha-carbinolamine dehydratase family.

The catalysed reaction is (4aS,6R)-4a-hydroxy-L-erythro-5,6,7,8-tetrahydrobiopterin = (6R)-L-erythro-6,7-dihydrobiopterin + H2O. The polypeptide is Putative pterin-4-alpha-carbinolamine dehydratase (Sinorhizobium fredii (strain NBRC 101917 / NGR234)).